The chain runs to 128 residues: C-C motif chemokine 28 (128 aa).

Positions 1 to 24 (MQQTGLTLALVALAVCVALPSSEA) are cleaved as a signal peptide. Intrachain disulfides connect Cys32–Cys60 and Cys33–Cys75. The interval 89 to 128 (EQAAKKNTKGNICHKKQAGKRKSKGAHQEKPEIHSHKSPY) is disordered. A compositionally biased stretch (basic residues) spans 94-113 (KNTKGNICHKKQAGKRKSKG). The span at 114-128 (AHQEKPEIHSHKSPY) shows a compositional bias: basic and acidic residues.

It belongs to the intercrine beta (chemokine CC) family.

The protein resides in the secreted. Its function is as follows. Chemotactic activity for resting CD4, CD8 T-cells and eosinophils. Binds to CCR3 and CCR10 and induces calcium mobilization in a dose-dependent manner. The protein is C-C motif chemokine 28 (CCL28) of Canis lupus familiaris (Dog).